Consider the following 558-residue polypeptide: Suppressor of zyg-1 protein 20 (558 aa).

In terms of domain architecture, SUZ spans 45–146; that stretch reads KVKAEESSGV…ARNRILGTEY (102 aa). 3 disordered regions span residues 50–132, 205–241, and 374–558; these read ESSG…ERQA, FTQP…QQSL, and QRNQ…NRPQ. A compositionally biased stretch (basic and acidic residues) spans 69-81; that stretch reads EEPKRVFLRRPKD. Over residues 94–109 the composition is skewed to polar residues; that stretch reads PPTSADTEEQPVTNVR. The segment covering 117–131 has biased composition (basic and acidic residues); that stretch reads NQKEKQPAPTYEERQ. Low complexity-rich tracts occupy residues 374–394 and 424–477; these read QRNQ…QNRQ and NNGQ…QQQQ. 2 stretches are compositionally biased toward polar residues: residues 478–508 and 545–558; these read NKSG…SQNP and SASQ…NRPQ.

As to quaternary structure, interacts (via C-terminus) with atx-2 (via C-terminus); the interaction is RNA independent. Interacts with let-92. Post-translationally, phosphorylated. May be dephosphorylated by let-92.

Its subcellular location is the cytoplasm. It is found in the cytoskeleton. The protein localises to the microtubule organizing center. The protein resides in the centrosome. It localises to the centriole. Its subcellular location is the nucleus. It is found in the nucleolus. The protein localises to the chromosome. Its function is as follows. RNA binding protein that is required for normal cell division and cytokinesis during embryonic development. Functions with RNA-binding protein atx-2 to ensure embryonic cell division, and to this end, plays a role in the regulation of centrosome assembly, position and size, and in astral microtubule outgrowth and nucleation. Furthermore, negatively regulates the levels of the protein kinase zyg-1 at the centrosome. Also involved in ensuring centrosome attachment to the nuclear envelope. This is Suppressor of zyg-1 protein 20 from Caenorhabditis elegans.